Consider the following 421-residue polypeptide: MKLLVVGSGGREHAIAKKLLASKGVDQVFVAPGNDGMTLDGLDLVNIVVSEHSRLIAFAKENEISWAFIGPDDALAAGIVDDFNSAGLRAFGPTKAAAELEWSKDFAKEIMVKYNVPTAAYGTFSDFEKAKAYIEEQGAPIVVKADGLALGKGVVVAETVEQAVEAAQEMLLDNKFGDSGARVVIEEFLDGEEFSLFAFANGDKFYIMPTAQDHKRAFDGDKGPNTGGMGAYAPVPHLPQSVVDTAVEMIVRPVLEGMVAEGRPYLGVLYVGLILTADGPKVIEFNSRFGDPETQIILPRLTSDFAQNIDDIMMGIEPYITWQKDGVTLGVVVASEGYPFDYEKGVPLPEKTDGDIITYYAGVKFSENSELLLSNGGRVYMLVTTEDSVKAGQDKIYTQLAQQDTTGLFYRNDIGSKAIRE.

The 207-residue stretch at 108-314 (KEIMVKYNVP…FAQNIDDIMM (207 aa)) folds into the ATP-grasp domain. An ATP-binding site is contributed by 134–195 (IEEQGAPIVV…EEFLDGEEFS (62 aa)). Mg(2+) is bound by residues Glu284 and Asn286.

This sequence belongs to the GARS family. It depends on Mg(2+) as a cofactor. Mn(2+) is required as a cofactor.

It catalyses the reaction 5-phospho-beta-D-ribosylamine + glycine + ATP = N(1)-(5-phospho-beta-D-ribosyl)glycinamide + ADP + phosphate + H(+). Its pathway is purine metabolism; IMP biosynthesis via de novo pathway; N(1)-(5-phospho-D-ribosyl)glycinamide from 5-phospho-alpha-D-ribose 1-diphosphate: step 2/2. The sequence is that of Phosphoribosylamine--glycine ligase from Streptococcus pyogenes serotype M1.